The following is a 469-amino-acid chain: NADH-quinone oxidoreductase subunit N (469 aa).

A run of 14 helical transmembrane segments spans residues 6-26, 37-57, 61-81, 96-116, 121-141, 156-176, 197-217, 234-254, 263-283, 291-311, 315-335, 362-382, 397-419, and 441-461; these read IWII…LLLG, VGVA…PAAL, LGVA…LTAA, ISGE…AVVS, LLIL…LVAI, LLLG…LYAA, PIAL…ISLV, VVAF…LLLL, LHTP…LAAL, MLAY…LTGS, FAAV…AFGA, AGIL…AGFI, IPLA…RVVV, and IALS…SPLL.

This sequence belongs to the complex I subunit 2 family. In terms of assembly, NDH-1 is composed of 14 different subunits. Subunits NuoA, H, J, K, L, M, N constitute the membrane sector of the complex.

The protein localises to the cell inner membrane. The catalysed reaction is a quinone + NADH + 5 H(+)(in) = a quinol + NAD(+) + 4 H(+)(out). Its function is as follows. NDH-1 shuttles electrons from NADH, via FMN and iron-sulfur (Fe-S) centers, to quinones in the respiratory chain. The immediate electron acceptor for the enzyme in this species is believed to be ubiquinone. Couples the redox reaction to proton translocation (for every two electrons transferred, four hydrogen ions are translocated across the cytoplasmic membrane), and thus conserves the redox energy in a proton gradient. The protein is NADH-quinone oxidoreductase subunit N of Geotalea uraniireducens (strain Rf4) (Geobacter uraniireducens).